The chain runs to 392 residues: Probable protein phosphatase 2C 29 (392 aa).

In terms of domain architecture, PPM-type phosphatase spans 44–353 (DYSVAVAQAN…DDITVVVLFL (310 aa)). Mn(2+) contacts are provided by Asp-75, Gly-76, Asp-285, and Asp-344. The tract at residues 360 to 392 (AGRGDEIDGTDGPVDVFSLSPDDREDPTRPVLR) is disordered.

This sequence belongs to the PP2C family. The cofactor is Mg(2+). It depends on Mn(2+) as a cofactor.

The catalysed reaction is O-phospho-L-seryl-[protein] + H2O = L-seryl-[protein] + phosphate. The enzyme catalyses O-phospho-L-threonyl-[protein] + H2O = L-threonyl-[protein] + phosphate. In Oryza sativa subsp. japonica (Rice), this protein is Probable protein phosphatase 2C 29.